Reading from the N-terminus, the 218-residue chain is Ribosome maturation factor RimM (218 aa).

The PRC barrel domain maps to 141-214; that stretch reads GELWWDRDLV…HIVVDPPPGL (74 aa).

The protein belongs to the RimM family. Binds ribosomal protein uS19.

The protein localises to the cytoplasm. In terms of biological role, an accessory protein needed during the final step in the assembly of 30S ribosomal subunit, possibly for assembly of the head region. Essential for efficient processing of 16S rRNA. May be needed both before and after RbfA during the maturation of 16S rRNA. It has affinity for free ribosomal 30S subunits but not for 70S ribosomes. This is Ribosome maturation factor RimM from Parafrankia sp. (strain EAN1pec).